The sequence spans 206 residues: Guanylate kinase (206 aa).

The 179-residue stretch at 6 to 184 folds into the Guanylate kinase-like domain; that stretch reads GILFILSGPS…AVDKVKTIIK (179 aa). 13–20 lines the ATP pocket; sequence GPSGVGKG.

Belongs to the guanylate kinase family.

The protein resides in the cytoplasm. The enzyme catalyses GMP + ATP = GDP + ADP. Functionally, essential for recycling GMP and indirectly, cGMP. The chain is Guanylate kinase from Oceanobacillus iheyensis (strain DSM 14371 / CIP 107618 / JCM 11309 / KCTC 3954 / HTE831).